Here is an 89-residue protein sequence, read N- to C-terminus: Small ribosomal subunit protein uS15 (89 aa).

This sequence belongs to the universal ribosomal protein uS15 family. Part of the 30S ribosomal subunit. Forms a bridge to the 50S subunit in the 70S ribosome, contacting the 23S rRNA.

Its function is as follows. One of the primary rRNA binding proteins, it binds directly to 16S rRNA where it helps nucleate assembly of the platform of the 30S subunit by binding and bridging several RNA helices of the 16S rRNA. In terms of biological role, forms an intersubunit bridge (bridge B4) with the 23S rRNA of the 50S subunit in the ribosome. The polypeptide is Small ribosomal subunit protein uS15 (Dechloromonas aromatica (strain RCB)).